A 418-amino-acid chain; its full sequence is Voltage-gated ClC-type chloride channel ClcB (418 aa).

A run of 10 helical transmembrane segments spans residues 5–25 (LLIA…FRHA), 54–74 (LLTP…WQKF), 146–166 (LWIA…PLAG), 168–188 (LFIA…PVII), 222–242 (ALII…LTLM), 258–278 (WQLA…PAVW), 291–311 (APPL…AVLA), 316–336 (GAPG…GMLY), 352–372 (LLLG…APIM), and 380–400 (MTGE…ASVI).

This sequence belongs to the chloride channel (TC 2.A.49) family. ClcB subfamily.

The protein localises to the cell inner membrane. Its function is as follows. Probably acts as an electrical shunt for an outwardly-directed proton pump that is linked to amino acid decarboxylation, as part of the extreme acid resistance (XAR) response. The sequence is that of Voltage-gated ClC-type chloride channel ClcB from Escherichia coli O127:H6 (strain E2348/69 / EPEC).